Here is a 347-residue protein sequence, read N- to C-terminus: Elongation factor Ts (347 aa).

Positions 80-83 (TDFV) are involved in Mg(2+) ion dislocation from EF-Tu.

Belongs to the EF-Ts family.

Its subcellular location is the cytoplasm. Functionally, associates with the EF-Tu.GDP complex and induces the exchange of GDP to GTP. It remains bound to the aminoacyl-tRNA.EF-Tu.GTP complex up to the GTP hydrolysis stage on the ribosome. This Streptococcus gordonii (strain Challis / ATCC 35105 / BCRC 15272 / CH1 / DL1 / V288) protein is Elongation factor Ts.